We begin with the raw amino-acid sequence, 429 residues long: Adenylosuccinate synthetase (429 aa).

Residues 12–18 (GDEGKGK) and 40–42 (GHT) each bind GTP. The Proton acceptor role is filled by Asp-13. Residues Asp-13 and Gly-40 each coordinate Mg(2+). Residues 13-16 (DEGK), 38-41 (NAGH), Thr-128, Arg-142, Gln-223, Thr-238, and Arg-302 contribute to the IMP site. His-41 serves as the catalytic Proton donor. 298 to 304 (VNTGRKR) provides a ligand contact to substrate. Residues Arg-304, 330-332 (KLD), and 412-414 (GVG) contribute to the GTP site.

The protein belongs to the adenylosuccinate synthetase family. In terms of assembly, homodimer. Requires Mg(2+) as cofactor.

It is found in the cytoplasm. It catalyses the reaction IMP + L-aspartate + GTP = N(6)-(1,2-dicarboxyethyl)-AMP + GDP + phosphate + 2 H(+). It participates in purine metabolism; AMP biosynthesis via de novo pathway; AMP from IMP: step 1/2. Functionally, plays an important role in the de novo pathway of purine nucleotide biosynthesis. Catalyzes the first committed step in the biosynthesis of AMP from IMP. This Corynebacterium jeikeium (strain K411) protein is Adenylosuccinate synthetase.